The chain runs to 207 residues: NADH-quinone oxidoreductase subunit C (207 aa).

Belongs to the complex I 30 kDa subunit family. NDH-1 is composed of 14 different subunits. Subunits NuoB, C, D, E, F, and G constitute the peripheral sector of the complex.

The protein resides in the cell inner membrane. It carries out the reaction a quinone + NADH + 5 H(+)(in) = a quinol + NAD(+) + 4 H(+)(out). In terms of biological role, NDH-1 shuttles electrons from NADH, via FMN and iron-sulfur (Fe-S) centers, to quinones in the respiratory chain. The immediate electron acceptor for the enzyme in this species is believed to be ubiquinone. Couples the redox reaction to proton translocation (for every two electrons transferred, four hydrogen ions are translocated across the cytoplasmic membrane), and thus conserves the redox energy in a proton gradient. In Jannaschia sp. (strain CCS1), this protein is NADH-quinone oxidoreductase subunit C.